The primary structure comprises 264 residues: Thymidylate synthase (264 aa).

A dUMP-binding site is contributed by arginine 21. Position 51 (histidine 51) interacts with (6R)-5,10-methylene-5,6,7,8-tetrahydrofolate. A dUMP-binding site is contributed by 126 to 127; the sequence is RR. Cysteine 146 serves as the catalytic Nucleophile. DUMP-binding positions include 166-169, asparagine 177, and 207-209; these read RSCD and HLY. A (6R)-5,10-methylene-5,6,7,8-tetrahydrofolate-binding site is contributed by aspartate 169. Alanine 263 lines the (6R)-5,10-methylene-5,6,7,8-tetrahydrofolate pocket.

Belongs to the thymidylate synthase family. Bacterial-type ThyA subfamily. As to quaternary structure, homodimer.

It is found in the cytoplasm. The catalysed reaction is dUMP + (6R)-5,10-methylene-5,6,7,8-tetrahydrofolate = 7,8-dihydrofolate + dTMP. The protein operates within pyrimidine metabolism; dTTP biosynthesis. Functionally, catalyzes the reductive methylation of 2'-deoxyuridine-5'-monophosphate (dUMP) to 2'-deoxythymidine-5'-monophosphate (dTMP) while utilizing 5,10-methylenetetrahydrofolate (mTHF) as the methyl donor and reductant in the reaction, yielding dihydrofolate (DHF) as a by-product. This enzymatic reaction provides an intracellular de novo source of dTMP, an essential precursor for DNA biosynthesis. The chain is Thymidylate synthase from Shewanella amazonensis (strain ATCC BAA-1098 / SB2B).